A 451-amino-acid polypeptide reads, in one-letter code: D-inositol 3-phosphate glycosyltransferase (451 aa).

H21 is a 1D-myo-inositol 3-phosphate binding site. Residues 27–28 and G35 each bind UDP-N-acetyl-alpha-D-glucosamine; that span reads QP. Residues 32–37, K90, Y123, T147, and R167 each bind 1D-myo-inositol 3-phosphate; that span reads DAGGMN. UDP-N-acetyl-alpha-D-glucosamine-binding residues include R241, K246, and Q305. 3 residues coordinate Mg(2+): Y314, R315, and A317. 2 residues coordinate UDP-N-acetyl-alpha-D-glucosamine: E327 and E335. T341 contacts Mg(2+).

It belongs to the glycosyltransferase group 1 family. MshA subfamily. Homodimer.

It catalyses the reaction 1D-myo-inositol 3-phosphate + UDP-N-acetyl-alpha-D-glucosamine = 1D-myo-inositol 2-acetamido-2-deoxy-alpha-D-glucopyranoside 3-phosphate + UDP + H(+). Functionally, catalyzes the transfer of a N-acetyl-glucosamine moiety to 1D-myo-inositol 3-phosphate to produce 1D-myo-inositol 2-acetamido-2-deoxy-glucopyranoside 3-phosphate in the mycothiol biosynthesis pathway. This Nocardia farcinica (strain IFM 10152) protein is D-inositol 3-phosphate glycosyltransferase.